Reading from the N-terminus, the 73-residue chain is Protein WFDC10B (73 aa).

Residues 1 to 21 (MAPQTLLLVLVLCVLLLQAQG) form the signal peptide. Residues 28–73 (RMQRIKVCEKRPSIDLCIHHCSYFQKCETNKICCSAFCGNICMSIL) enclose the WAP domain.

Ubiquitously expressed.

The protein localises to the secreted. This Homo sapiens (Human) protein is Protein WFDC10B (WFDC10B).